Consider the following 521-residue polypeptide: Probable feruloyl esterase B-2 (521 aa).

Residues 1 to 19 (MKVSLWLTLLGVNLSLALA) form the signal peptide. Residues N13, N53, N85, N98, and N138 are each glycosylated (N-linked (GlcNAc...) asparagine). 2 cysteine pairs are disulfide-bonded: C28–C75 and C63–C114. Disulfide bonds link C187-C440, C257-C274, C283-C291, and C506-C520. S188 functions as the Acyl-ester intermediate in the catalytic mechanism. Residue N235 is glycosylated (N-linked (GlcNAc...) asparagine). The Ca(2+) site is built by D258, D261, V263, D265, and I267. D399 acts as the Charge relay system in catalysis. N419 carries an N-linked (GlcNAc...) asparagine glycan. Catalysis depends on H439, which acts as the Charge relay system.

This sequence belongs to the tannase family.

It is found in the secreted. It catalyses the reaction feruloyl-polysaccharide + H2O = ferulate + polysaccharide.. Its function is as follows. Involved in degradation of plant cell walls. Hydrolyzes the feruloyl-arabinose ester bond in arabinoxylans as well as the feruloyl-galactose and feruloyl-arabinose ester bonds in pectin. In Aspergillus flavus (strain ATCC 200026 / FGSC A1120 / IAM 13836 / NRRL 3357 / JCM 12722 / SRRC 167), this protein is Probable feruloyl esterase B-2 (faeB-2).